The following is a 450-amino-acid chain: 23S rRNA (uracil(1939)-C(5))-methyltransferase RlmD (450 aa).

The disordered stretch occupies residues 1–22 (MAKHDRGLRFQPAGGSRAPQIP). The TRAM domain maps to 20–78 (QIPVGKKQRLTIQRLANDGRGIAFVEGRTWFVSGALAGEEVEARVLGSHGKVVEARAER). 4 residues coordinate [4Fe-4S] cluster: cysteine 91, cysteine 97, cysteine 100, and cysteine 179. Residues glutamine 283, phenylalanine 312, asparagine 317, glutamate 333, aspartate 360, and aspartate 381 each coordinate S-adenosyl-L-methionine. Cysteine 407 acts as the Nucleophile in catalysis.

The protein belongs to the class I-like SAM-binding methyltransferase superfamily. RNA M5U methyltransferase family. RlmD subfamily.

It carries out the reaction uridine(1939) in 23S rRNA + S-adenosyl-L-methionine = 5-methyluridine(1939) in 23S rRNA + S-adenosyl-L-homocysteine + H(+). Its function is as follows. Catalyzes the formation of 5-methyl-uridine at position 1939 (m5U1939) in 23S rRNA. The polypeptide is 23S rRNA (uracil(1939)-C(5))-methyltransferase RlmD (Pseudomonas fluorescens (strain ATCC BAA-477 / NRRL B-23932 / Pf-5)).